The primary structure comprises 136 residues: Large-conductance mechanosensitive channel (136 aa).

2 helical membrane-spanning segments follow: residues 10–30 (FAMRGNVVDLAVGVIIGAAFG) and 76–96 (GVFIQNVFDFLIVAFAIFMAI).

The protein belongs to the MscL family. In terms of assembly, homopentamer.

The protein localises to the cell inner membrane. Functionally, channel that opens in response to stretch forces in the membrane lipid bilayer. May participate in the regulation of osmotic pressure changes within the cell. This is Large-conductance mechanosensitive channel from Escherichia coli O139:H28 (strain E24377A / ETEC).